A 108-amino-acid chain; its full sequence is Protein YcgL (108 aa).

A YcgL domain is found at 12–96; sequence MFCVIYRSSK…PPEDLLKQHL (85 aa).

The protein is Protein YcgL of Escherichia coli O9:H4 (strain HS).